We begin with the raw amino-acid sequence, 408 residues long: 1-deoxy-D-xylulose 5-phosphate reductoisomerase (408 aa).

The NADPH site is built by T27, G28, S29, I30, A53, R54, N55, and N140. K141 serves as a coordination point for 1-deoxy-D-xylulose 5-phosphate. E142 serves as a coordination point for NADPH. D166 lines the Mn(2+) pocket. S167, E168, S192, and H215 together coordinate 1-deoxy-D-xylulose 5-phosphate. E168 lines the Mn(2+) pocket. Position 221 (G221) interacts with NADPH. 1-deoxy-D-xylulose 5-phosphate contacts are provided by S228, N233, K234, and E237. Position 237 (E237) interacts with Mn(2+).

It belongs to the DXR family. Requires Mg(2+) as cofactor. Mn(2+) is required as a cofactor.

It catalyses the reaction 2-C-methyl-D-erythritol 4-phosphate + NADP(+) = 1-deoxy-D-xylulose 5-phosphate + NADPH + H(+). Its pathway is isoprenoid biosynthesis; isopentenyl diphosphate biosynthesis via DXP pathway; isopentenyl diphosphate from 1-deoxy-D-xylulose 5-phosphate: step 1/6. In terms of biological role, catalyzes the NADPH-dependent rearrangement and reduction of 1-deoxy-D-xylulose-5-phosphate (DXP) to 2-C-methyl-D-erythritol 4-phosphate (MEP). The protein is 1-deoxy-D-xylulose 5-phosphate reductoisomerase of Nitratidesulfovibrio vulgaris (strain DP4) (Desulfovibrio vulgaris).